Here is a 531-residue protein sequence, read N- to C-terminus: Na(+)/H(+) antiporter NhaB (531 aa).

The next 11 membrane-spanning stretches (helical) occupy residues 23 to 45 (IAIL…VAGW), 66 to 86 (PGGL…SQVL), 97 to 117 (LLLI…LFVF), 130 to 164 (VSLM…FYSI), 206 to 226 (LLMH…VGEP), 244 to 264 (LRMG…CFLV), 307 to 327 (AFVG…VGLI), 352 to 372 (EEAL…GVII), 393 to 413 (LVIF…VFVG), 451 to 471 (ATPN…APLI), and 478 to 498 (MVWM…LAIE).

This sequence belongs to the NhaB Na(+)/H(+) (TC 2.A.34) antiporter family.

The protein localises to the cell inner membrane. The enzyme catalyses 2 Na(+)(in) + 3 H(+)(out) = 2 Na(+)(out) + 3 H(+)(in). Its function is as follows. Na(+)/H(+) antiporter that extrudes sodium in exchange for external protons. The sequence is that of Na(+)/H(+) antiporter NhaB from Shewanella loihica (strain ATCC BAA-1088 / PV-4).